The sequence spans 157 residues: MPPPAAVASLTLQVPGGAHDVTSLATSPRTMAVPGTTEQLTIFYSGSMVKFDNVPREKIRYACRLRRLYSSLQRSLQTQDTSMFPSSSSLHIQTKRRGYSVIRLLREMLMVCSSTRTKPMLVHSDSIGAQRTGTPPSRRRIHARGKSRSCQEMSHCW.

The Tify domain maps to 33 to 68 (VPGTTEQLTIFYSGSMVKFDNVPREKIRYACRLRRL). Residues 126–147 (SIGAQRTGTPPSRRRIHARGKS) form a disordered region. Positions 137–147 (SRRRIHARGKS) are enriched in basic residues.

Belongs to the TIFY/JAZ family. In terms of processing, ubiquitinated. Targeted for degradation by the SCF(COI1) E3 ubiquitin ligase-proteasome pathway during jasmonate signaling.

Repressor of jasmonate responses. This chain is Protein TIFY 8, found in Oryza sativa subsp. japonica (Rice).